The sequence spans 276 residues: MPSMSPSSISTEKSPPPSDTSMAIVAFDNSTTHLSSSPSPPHSLDHSSDSEKEDEKRRPESRRNKNPVKIEETPSPIVVVHNHNRSVKEVVPTRKTARVGSGRSSGQRSGAVLAILRRSRREEIVKFVALGFRLSEVVLALISFSIMAADKTKGWSGDSFDRYKEYRFCLSVNVVAFIYASFQACDLAYHLVKEKHLISHHLRPLFEFIIDQVLAYLLMCASTAAVTRVDDWVSNWGKDDFTEMASASIAMSFLTFLAFAFSSLISGYNLFNQDSL.

The segment covering Met1–Lys13 has biased composition (polar residues). Residues Met1–Pro76 form a disordered region. Residues Met1–Lys126 lie on the Cytoplasmic side of the membrane. The segment covering Ser43 to Glu72 has biased composition (basic and acidic residues). The helical transmembrane segment at Phe127–Met147 threads the bilayer. Over Ala148 to Arg167 the chain is Extracellular. A helical membrane pass occupies residues Phe168–Ala188. Residues Tyr189–Leu205 lie on the Cytoplasmic side of the membrane. Residues Phe206–Val226 form a helical membrane-spanning segment. At Thr227–Met244 the chain is on the extracellular side. Residues Ala245 to Ile265 traverse the membrane as a helical segment. Residues Ser266–Leu276 lie on the Cytoplasmic side of the membrane.

It belongs to the Casparian strip membrane proteins (CASP) family. As to quaternary structure, homodimer and heterodimers.

Its subcellular location is the cell membrane. This chain is CASP-like protein 4A3, found in Arabidopsis lyrata subsp. lyrata (Lyre-leaved rock-cress).